Reading from the N-terminus, the 556-residue chain is Acetyl-coenzyme A thioesterase (556 aa).

The HotDog ACOT-type 1 domain maps to 6-118 (APGEVLMSQA…FSTFVVKPLG (113 aa)). Lys-34 carries the post-translational modification N6-succinyllysine. Residues 54–56 (TAS) and 83–85 (STS) contribute to the CoA site. Lys-97 bears the N6-succinyllysine mark. Arg-145 lines the CoA pocket. 2 positions are modified to N6-succinyllysine: Lys-160 and Lys-229. The HotDog ACOT-type 2 domain occupies 180–295 (MATSVQSIEL…FLIYNAVDDQ (116 aa)). CoA is bound at residue 235-237 (KFR). The 210-residue stretch at 341–550 (GTQWDISKKG…IKFIENATHD (210 aa)) folds into the START domain.

In terms of assembly, homodimer or homotetramer.

The protein localises to the cytoplasm. The protein resides in the cytosol. The catalysed reaction is acetyl-CoA + H2O = acetate + CoA + H(+). The enzyme catalyses butanoyl-CoA + H2O = butanoate + CoA + H(+). It catalyses the reaction hexanoyl-CoA + H2O = hexanoate + CoA + H(+). It functions in the pathway lipid metabolism; fatty acid metabolism. Its activity is regulated as follows. Allosterically regulated by ATP (activator) and ADP (inhibitor). Cold labile, it dissociates into inactive monomers at low temperature. Its function is as follows. Catalyzes the hydrolysis of acyl-CoAs into free fatty acids and coenzyme A (CoASH), regulating their respective intracellular levels. Preferentially hydrolyzes acetyl-CoA. The polypeptide is Acetyl-coenzyme A thioesterase (Acot12) (Rattus norvegicus (Rat)).